Reading from the N-terminus, the 261-residue chain is UPF0246 protein Daci_5283 (261 aa).

The protein belongs to the UPF0246 family.

The chain is UPF0246 protein Daci_5283 from Delftia acidovorans (strain DSM 14801 / SPH-1).